The sequence spans 343 residues: Ferredoxin--NADP reductase (343 aa).

Residues Cys18, Asp37, Gln45, Tyr50, Val90, Phe125, Asp290, and Thr331 each coordinate FAD.

It belongs to the ferredoxin--NADP reductase type 2 family. In terms of assembly, homodimer. The cofactor is FAD.

It carries out the reaction 2 reduced [2Fe-2S]-[ferredoxin] + NADP(+) + H(+) = 2 oxidized [2Fe-2S]-[ferredoxin] + NADPH. In Parvibaculum lavamentivorans (strain DS-1 / DSM 13023 / NCIMB 13966), this protein is Ferredoxin--NADP reductase.